Reading from the N-terminus, the 638-residue chain is Chaperone protein HtpG (638 aa).

The a; substrate-binding stretch occupies residues 1–328 (MGDVEELKFS…SSDLPLNISR (328 aa)). Residues 329 to 558 (ETLQNNMVIE…EHALDIRMER (230 aa)) are b. Positions 484–508 (LEKFTEGDDQQSTKKKKEKKDTDDA) are disordered. A c region spans residues 559–638 (FLREQKQLSY…NQVLARLFKK (80 aa)).

This sequence belongs to the heat shock protein 90 family. Homodimer.

Its subcellular location is the cytoplasm. Molecular chaperone. Has ATPase activity. This Anaplasma marginale (strain St. Maries) protein is Chaperone protein HtpG.